Consider the following 105-residue polypeptide: ESAT-6-like protein EsxB (105 aa).

The interval 1–23 (MSQGFKTEADVMRNTAHRVDDTN) is disordered. The segment covering 7 to 21 (TEADVMRNTAHRVDD) has biased composition (basic and acidic residues).

Belongs to the WXG100 family. CFP-10 subfamily. In terms of assembly, forms a tight 1:1 complex with EsxB.

In Corynebacterium diphtheriae (strain ATCC 700971 / NCTC 13129 / Biotype gravis), this protein is ESAT-6-like protein EsxB.